A 671-amino-acid polypeptide reads, in one-letter code: Arginine--tRNA ligase (671 aa).

The 'HIGH' region signature appears at 124 to 134; the sequence is PNVAKPMHVGH. A disordered region spans residues 223–254; sequence KSDAKTAKEVSDQSESDENLKPKDKKKLRKNA. The span at 224–233 shows a compositional bias: basic and acidic residues; sequence SDAKTAKEVS.

This sequence belongs to the class-I aminoacyl-tRNA synthetase family. Monomer.

Its subcellular location is the cytoplasm. The catalysed reaction is tRNA(Arg) + L-arginine + ATP = L-arginyl-tRNA(Arg) + AMP + diphosphate. The chain is Arginine--tRNA ligase from Rhodopirellula baltica (strain DSM 10527 / NCIMB 13988 / SH1).